Here is a 302-residue protein sequence, read N- to C-terminus: Zinc finger protein-like 1 homolog (302 aa).

A B box-type; degenerate zinc finger spans residues 1–43 (MGLCKCPKRLVTNQFCFEHRVNVCEHCMVQSHPKCIVQSYLQW). Residues 53-101 (CNLCGTSLEQGECVRLVCYHVFHWDCLNARQAALPANTAPRGHQCPGCS) form an RING-type; atypical zinc finger. Positions 168–233 (IHSGGERERG…RDDNKYQRRT (66 aa)) are disordered. Residues 198-208 (PPSSGDFNASS) show a composition bias toward polar residues. A Phosphoserine modification is found at Ser217. A helical transmembrane segment spans residues 258-278 (WFLVLSGILAFVMFIYLLAWM).

Belongs to the ZFPL1 family.

The protein resides in the membrane. This is Zinc finger protein-like 1 homolog from Drosophila pseudoobscura pseudoobscura (Fruit fly).